A 182-amino-acid chain; its full sequence is WUSCHEL-related homeobox 5 (182 aa).

Residues 1–24 (MSFSVKGRSLRGNNNGGTGTKCGR) are disordered. The homeobox; WUS-type DNA-binding region spans 20–84 (TKCGRWNPTV…NHKARERQKR (65 aa)).

Belongs to the WUS homeobox family. As to expression, specifically expressed in the central cells of a quiescent center (QC) of the root.

The protein resides in the nucleus. Its function is as follows. Transcription factor, which may be involved in the specification and maintenance of the stem cells (QC cells) in the root apical meristem (RAM). The chain is WUSCHEL-related homeobox 5 (WOX5) from Arabidopsis thaliana (Mouse-ear cress).